The chain runs to 273 residues: Putative pyruvate, phosphate dikinase regulatory protein (273 aa).

ADP is bound at residue 149–156; it reads GPSRTSKT.

The protein belongs to the pyruvate, phosphate/water dikinase regulatory protein family. PDRP subfamily.

The enzyme catalyses N(tele)-phospho-L-histidyl/L-threonyl-[pyruvate, phosphate dikinase] + ADP = N(tele)-phospho-L-histidyl/O-phospho-L-threonyl-[pyruvate, phosphate dikinase] + AMP + H(+). The catalysed reaction is N(tele)-phospho-L-histidyl/O-phospho-L-threonyl-[pyruvate, phosphate dikinase] + phosphate + H(+) = N(tele)-phospho-L-histidyl/L-threonyl-[pyruvate, phosphate dikinase] + diphosphate. Functionally, bifunctional serine/threonine kinase and phosphorylase involved in the regulation of the pyruvate, phosphate dikinase (PPDK) by catalyzing its phosphorylation/dephosphorylation. The sequence is that of Putative pyruvate, phosphate dikinase regulatory protein from Rickettsia massiliae (strain Mtu5).